Here is a 428-residue protein sequence, read N- to C-terminus: ATP-dependent RNA helicase RhlB (428 aa).

Positions 9 to 37 match the Q motif motif; that stretch reads QKFSDFALHPLVVEALENKGFQYCTPIQA. In terms of domain architecture, Helicase ATP-binding spans 40 to 219; that stretch reads LPLTLSGRDV…FEQMNNAEYV (180 aa). 53–60 contributes to the ATP binding site; it reads AQTGTGKT. Residues 165-168 carry the DEAD box motif; sequence DEAD. Residues 245-390 form the Helicase C-terminal domain; it reads RLLQTLIEEE…VSKYNSDALL (146 aa). The segment at 394–428 is disordered; that stretch reads PAPKRLARTRTGNGPRRNSAPRRSGAPRNNRKRPG.

This sequence belongs to the DEAD box helicase family. RhlB subfamily. Component of the RNA degradosome, which is a multiprotein complex involved in RNA processing and mRNA degradation.

The protein localises to the cytoplasm. The enzyme catalyses ATP + H2O = ADP + phosphate + H(+). In terms of biological role, DEAD-box RNA helicase involved in RNA degradation. Has RNA-dependent ATPase activity and unwinds double-stranded RNA. This chain is ATP-dependent RNA helicase RhlB, found in Yersinia pseudotuberculosis serotype O:1b (strain IP 31758).